A 327-amino-acid polypeptide reads, in one-letter code: BarH-like 1 homeobox protein (327 aa).

Disordered stretches follow at residues 1–90 (MEGS…AQSR), 113–181 (PYSS…PRKA), and 303–327 (LQGASEPPPPLPPLPGVLPRAAQPR). Residues 33–54 (RSPLELSPRSESSSDCSSPASP) show a composition bias toward low complexity. Residues 79-90 (QPGQLSAPAQSR) show a composition bias toward polar residues. Basic and acidic residues-rich tracts occupy residues 133–143 (AGEDFRDKLDK) and 152–166 (SEYKVKEEGDREISS). The homeobox DNA-binding region spans 178-237 (PRKARTAFTDHQLAQLERSFERQKYLSVQDRMELAASLNLTDTQVKTWYQNRRTKWKRQT). Over residues 308 to 318 (EPPPPLPPLPG) the composition is skewed to pro residues.

It belongs to the BAR homeobox family.

Its subcellular location is the nucleus. This Mus musculus (Mouse) protein is BarH-like 1 homeobox protein (Barhl1).